A 120-amino-acid polypeptide reads, in one-letter code: Glycine cleavage system H protein (120 aa).

The 83-residue stretch at 17 to 99 (IATVGITSHA…QGAGWLYRMR (83 aa)) folds into the Lipoyl-binding domain. K58 bears the N6-lipoyllysine mark.

Belongs to the GcvH family. In terms of assembly, the glycine cleavage system is composed of four proteins: P, T, L and H. (R)-lipoate serves as cofactor.

Functionally, the glycine cleavage system catalyzes the degradation of glycine. The H protein shuttles the methylamine group of glycine from the P protein to the T protein. The sequence is that of Glycine cleavage system H protein from Methylobacterium nodulans (strain LMG 21967 / CNCM I-2342 / ORS 2060).